The primary structure comprises 543 residues: Protein B602L (543 aa).

Tandem repeats lie at residues 161-164, 165-168, 169-172, 173-176, 177-180, 181-184, 185-188, 189-192, 193-196, 197-200, 201-204, 205-208, and 209-212. Residues 161–212 form a 13 X 4 AA tandem repeats of [CN]-[ATV]-[DS]-T region; sequence CASTCASTCASTCASTCADTNVDTCTDTCASTCADTNVDTCASTCADTCAST.

This sequence belongs to the asfivirus B602L family.

It is found in the host cytoplasm. Functionally, plays an essential role in the assembly of the icosahedral capsid of the virus. Allows the assembly of 3 molecules of hexon protein p72 and formation of a thermostable trimer. This chain is Protein B602L, found in African swine fever virus (isolate Pig/Kenya/KEN-50/1950) (ASFV).